Here is a 504-residue protein sequence, read N- to C-terminus: Glucose-6-phosphate isomerase (504 aa).

The Proton donor role is filled by Glu333. Active-site residues include His364 and Lys473.

The protein belongs to the GPI family.

Its subcellular location is the cytoplasm. The enzyme catalyses alpha-D-glucose 6-phosphate = beta-D-fructose 6-phosphate. The protein operates within carbohydrate biosynthesis; gluconeogenesis. It functions in the pathway carbohydrate degradation; glycolysis; D-glyceraldehyde 3-phosphate and glycerone phosphate from D-glucose: step 2/4. In terms of biological role, catalyzes the reversible isomerization of glucose-6-phosphate to fructose-6-phosphate. The polypeptide is Glucose-6-phosphate isomerase (Xanthomonas campestris pv. campestris (strain B100)).